Reading from the N-terminus, the 111-residue chain is UPF0060 membrane protein Krad_3114 (111 aa).

The next 4 helical transmembrane spans lie at 7–27 (IALF…VWQG), 33–53 (GLAW…AATL), 62–82 (VLAA…AVVD), and 88–108 (RFDV…MYAP).

This sequence belongs to the UPF0060 family.

The protein resides in the cell membrane. This Kineococcus radiotolerans (strain ATCC BAA-149 / DSM 14245 / SRS30216) protein is UPF0060 membrane protein Krad_3114.